Here is a 399-residue protein sequence, read N- to C-terminus: F-box protein At1g10110 (399 aa).

Residues 9-56 (PNWSELVTDILSLVFKHLSFTDFARAKTVCSSWYFASKSSSPRKNHTP) enclose the F-box domain.

The polypeptide is F-box protein At1g10110 (Arabidopsis thaliana (Mouse-ear cress)).